Reading from the N-terminus, the 169-residue chain is Centrosomal protein 20 (169 aa).

The interval 1–104 (MATVGDLKAV…VVEDLNSQSV (104 aa)) is necessary and sufficient for homooligomerization and localization to centrosomes and pericentriolar satellites. The 33-residue stretch at 49–81 (ENLLINELIREYLAFNKYSYTSSVLTAETGLSE) folds into the LisH domain. The disordered stretch occupies residues 135-169 (TFRNIPRGRNTKDTHSGPVQLTQTSTEDWHQRRHR). Residues 151–160 (GPVQLTQTST) are compositionally biased toward polar residues.

This sequence belongs to the CEP43 family. In terms of assembly, homooligomer; probably required for localization to centrosomes.

The protein resides in the cell projection. It is found in the cilium. Its subcellular location is the cytoplasm. The protein localises to the cytoskeleton. It localises to the cilium basal body. The protein resides in the microtubule organizing center. It is found in the centrosome. Its subcellular location is the cytoplasmic granule. The protein localises to the centriolar satellite. In terms of biological role, involved in the biogenesis of cilia. Required for the recruitment of PLK1 to centrosomes and S phase progression. The chain is Centrosomal protein 20 (Cep20) from Xenopus laevis (African clawed frog).